Consider the following 223-residue polypeptide: Ribose-5-phosphate isomerase A (223 aa).

Substrate is bound by residues 32–35, 83–86, and 96–99; these read TGST, DGAD, and KGGG. The active-site Proton acceptor is E105. K123 is a binding site for substrate.

It belongs to the ribose 5-phosphate isomerase family. In terms of assembly, homodimer.

The catalysed reaction is aldehydo-D-ribose 5-phosphate = D-ribulose 5-phosphate. The protein operates within carbohydrate degradation; pentose phosphate pathway; D-ribose 5-phosphate from D-ribulose 5-phosphate (non-oxidative stage): step 1/1. Catalyzes the reversible conversion of ribose-5-phosphate to ribulose 5-phosphate. The chain is Ribose-5-phosphate isomerase A from Acinetobacter baumannii (strain AYE).